The following is a 633-amino-acid chain: Pesticidal crystal protein Cry2Aa (633 aa).

The protein belongs to the delta endotoxin family.

In terms of biological role, promotes colloidosmotic lysis by binding to the midgut epithelial cells of both dipteran (Aedes aegypti) and lepidopteran (Manduca sexta) larvae. The protein is Pesticidal crystal protein Cry2Aa (cry2Aa) of Bacillus thuringiensis subsp. kurstaki.